The sequence spans 251 residues: Cell division protein ZapD (251 aa).

It belongs to the ZapD family. In terms of assembly, interacts with FtsZ.

Its subcellular location is the cytoplasm. Its function is as follows. Cell division factor that enhances FtsZ-ring assembly. Directly interacts with FtsZ and promotes bundling of FtsZ protofilaments, with a reduction in FtsZ GTPase activity. The polypeptide is Cell division protein ZapD (Paraburkholderia phytofirmans (strain DSM 17436 / LMG 22146 / PsJN) (Burkholderia phytofirmans)).